Reading from the N-terminus, the 101-residue chain is Large ribosomal subunit protein uL24 (101 aa).

This sequence belongs to the universal ribosomal protein uL24 family. Part of the 50S ribosomal subunit.

In terms of biological role, one of two assembly initiator proteins, it binds directly to the 5'-end of the 23S rRNA, where it nucleates assembly of the 50S subunit. One of the proteins that surrounds the polypeptide exit tunnel on the outside of the subunit. The chain is Large ribosomal subunit protein uL24 from Dinoroseobacter shibae (strain DSM 16493 / NCIMB 14021 / DFL 12).